The following is a 165-amino-acid chain: Ecotin-like protein 4 (165 aa).

This sequence belongs to the protease inhibitor I11 (ecotin) family.

The protein is Ecotin-like protein 4 of Trypanosoma brucei brucei (strain 927/4 GUTat10.1).